The chain runs to 345 residues: Phosphate acyltransferase (345 aa).

It belongs to the PlsX family. As to quaternary structure, homodimer. Probably interacts with PlsY.

The protein localises to the cytoplasm. The enzyme catalyses a fatty acyl-[ACP] + phosphate = an acyl phosphate + holo-[ACP]. It participates in lipid metabolism; phospholipid metabolism. In terms of biological role, catalyzes the reversible formation of acyl-phosphate (acyl-PO(4)) from acyl-[acyl-carrier-protein] (acyl-ACP). This enzyme utilizes acyl-ACP as fatty acyl donor, but not acyl-CoA. This Photorhabdus laumondii subsp. laumondii (strain DSM 15139 / CIP 105565 / TT01) (Photorhabdus luminescens subsp. laumondii) protein is Phosphate acyltransferase.